A 192-amino-acid polypeptide reads, in one-letter code: Orotate phosphoribosyltransferase (192 aa).

5-phospho-alpha-D-ribose 1-diphosphate is bound by residues R101, K102, K105, H107, and 129–137 (EDVITTGGS). T133 and R161 together coordinate orotate.

The protein belongs to the purine/pyrimidine phosphoribosyltransferase family. PyrE subfamily. In terms of assembly, homodimer. The cofactor is Mg(2+).

It carries out the reaction orotidine 5'-phosphate + diphosphate = orotate + 5-phospho-alpha-D-ribose 1-diphosphate. It functions in the pathway pyrimidine metabolism; UMP biosynthesis via de novo pathway; UMP from orotate: step 1/2. Catalyzes the transfer of a ribosyl phosphate group from 5-phosphoribose 1-diphosphate to orotate, leading to the formation of orotidine monophosphate (OMP). This Sorangium cellulosum (strain So ce56) (Polyangium cellulosum (strain So ce56)) protein is Orotate phosphoribosyltransferase.